The chain runs to 267 residues: Nanos homolog 1 (267 aa).

The interval 40-56 (FSSWNDYLGLATLITRA) is essential for its translational repressor activity. Residues 57–94 (SDRGSPHEGPGPTAAGPTMGPPEDDEDDDGEEPEAGGR) form a disordered region. Residues 78–90 (PEDDEDDDGEEPE) are compositionally biased toward acidic residues. Residues 188–242 (VCVFCRNNKEAVALYTTHILKGPDGRVLCPVLRRYTCPLCGASGDNAHTIKYCPL) form a Nanos-type zinc finger. The Zn(2+) site is built by C189, C192, H205, C216, C224, C227, H235, and C240. 2 consecutive short sequence motifs (C2HC) follow at residues 189–216 (CVFC…RVLC) and 224–240 (CPLC…IKYC). Positions 243–267 (SKVPPPTVRPPPRSNRDSLPSKKLR) are disordered. Over residues 244–255 (KVPPPTVRPPPR) the composition is skewed to pro residues. The span at 256–267 (SNRDSLPSKKLR) shows a compositional bias: basic and acidic residues.

It belongs to the nanos family. As to quaternary structure, interacts with PUM2, SNAPIN and CTNNB1. Interacts (via N-terminal region) with CTNND1. Interacts with DDX20 (via N-terminal region). As to expression, expressed in the oocyte. Transiently expressed in eight-cell embryos. At 12.5 dpc, it is re-expressed in the central nervous system and the expression continues in the adult brain, in which the hippocampal formation is the predominant region. Expressed in the seminiferous tubules of mature testis, but not in the primordial germ cells.

The protein resides in the cytoplasm. It is found in the perinuclear region. Functionally, may act as a translational repressor which regulates translation of specific mRNAs by forming a complex with PUM2 that associates with the 3'-UTR of mRNA targets. Capable of interfering with the proadhesive and anti-invasive functions of E-cadherin. Up-regulates the production of MMP14 to promote tumor cell invasion. Not essential for normal development. The polypeptide is Nanos homolog 1 (Nanos1) (Mus musculus (Mouse)).